The sequence spans 168 residues: Plastocyanin A, chloroplastic (168 aa).

The transit peptide at 1 to 69 (MATVTSAAVS…SAMIASNAMA (69 aa)) directs the protein to the chloroplast. The Plastocyanin-like domain occupies 70-168 (IDVLLGADDG…AGMVGKVTVN (99 aa)). Residues His-106, Cys-153, His-156, and Met-161 each contribute to the Cu cation site.

This sequence belongs to the plastocyanin family. It depends on Cu(2+) as a cofactor.

It localises to the plastid. Its subcellular location is the chloroplast thylakoid membrane. Its function is as follows. Participates in electron transfer between P700 and the cytochrome b6-f complex in photosystem I. This Populus nigra (Lombardy poplar) protein is Plastocyanin A, chloroplastic (PETE).